We begin with the raw amino-acid sequence, 532 residues long: Membrane protein insertase YidC (532 aa).

Transmembrane regions (helical) follow at residues 7–27 (FFIF…QSQM), 336–356 (LTIL…ITFI), 413–433 (GGFL…YMLI), 450–470 (LSSQ…MFFI), and 492–512 (PVIF…YYII).

This sequence belongs to the OXA1/ALB3/YidC family. Type 1 subfamily. In terms of assembly, interacts with the Sec translocase complex via SecD. Specifically interacts with transmembrane segments of nascent integral membrane proteins during membrane integration.

It localises to the cell membrane. In terms of biological role, required for the insertion and/or proper folding and/or complex formation of integral membrane proteins into the membrane. Involved in integration of membrane proteins that insert both dependently and independently of the Sec translocase complex, as well as at least some lipoproteins. Aids folding of multispanning membrane proteins. This chain is Membrane protein insertase YidC, found in Buchnera aphidicola subsp. Acyrthosiphon pisum (strain Tuc7).